The sequence spans 420 residues: C-methyltransferase NovU (420 aa).

It belongs to the methyltransferase superfamily.

Its pathway is antibiotic biosynthesis; novobiocin biosynthesis. In terms of biological role, C-methyltransferase that acts together with NovW to catalyze the formation of dTDP-4-keto-6-deoxy-5-C-methyl-L-lyxo-hexose from dTDP-4-keto-6-deoxy-D-glucose in the novobiocin biosynthesis pathway, an aminocoumarin family antibiotic that targets bacterial DNA gyrases. This is C-methyltransferase NovU (novU) from Streptomyces niveus (Streptomyces spheroides).